The following is a 193-amino-acid chain: Cysteine and glycine-rich protein 1 (193 aa).

The region spanning 10–61 is the LIM zinc-binding 1 domain; it reads CGVCQKTVYFAEEVQCEGNSFHKSCFLCMVCKKNLDSTTVAVHGEEIYCKSC. A Nuclear localization signal motif is present at residues 64–69; that stretch reads KKYGPK. At serine 81 the chain carries Phosphoserine. An N6-acetyllysine modification is found at lysine 84. Lysine 91 participates in a covalent cross-link: Glycyl lysine isopeptide (Lys-Gly) (interchain with G-Cter in SUMO2). N6-acetyllysine is present on residues lysine 112, lysine 131, lysine 137, and lysine 161. The region spanning 119–170 is the LIM zinc-binding 2 domain; it reads CPRCSQAVYAAEKVIGAGKSWHKACFRCAKCGKGLESTTLADKDGEIYCKGC. Serine 192 carries the phosphoserine modification.

In terms of assembly, interacts with ASCC1; ASCC2 and TRIP4.

Its subcellular location is the nucleus. Could play a role in neuronal development. The polypeptide is Cysteine and glycine-rich protein 1 (CSRP1) (Pongo abelii (Sumatran orangutan)).